The sequence spans 323 residues: Pantothenate kinase (323 aa).

Residues 1-12 (MAEQNAASTTGV) show a composition bias toward polar residues. A disordered region spans residues 1 to 24 (MAEQNAASTTGVKPSPRTPDFSPY). 108–115 (GSVAVGKS) lines the ATP pocket.

Belongs to the prokaryotic pantothenate kinase family.

It is found in the cytoplasm. The enzyme catalyses (R)-pantothenate + ATP = (R)-4'-phosphopantothenate + ADP + H(+). Its pathway is cofactor biosynthesis; coenzyme A biosynthesis; CoA from (R)-pantothenate: step 1/5. This Corynebacterium glutamicum (strain R) protein is Pantothenate kinase.